The sequence spans 313 residues: Nematocyst expressed protein 8 (313 aa).

A signal peptide spans 1–19 (MLRRPLLLVLFTVFSTLYA). Residues 24–56 (GVSPPTNESEAEVSPGDDEGPPEPGNEPDVNWR) form a disordered region. Residues 32 to 44 (SEAEVSPGDDEGP) show a composition bias toward acidic residues. 3 consecutive ShKT domains span residues 65 to 99 (CKDKGKDCESLADEGNCLKKLNYAVGNCPWTCRFC), 109 to 145 (CKDLAGERHCNGWKVKGDCVRLPDYMMQNCKLSCELC), and 151 to 186 (FKYTDEDVRCPEWAQAGYCSTNTDINLKCPHSCRKY). 7 disulfides stabilise this stretch: C65–C99, C72–C92, C81–C96, C109–C145, C127–C142, C160–C179, and C169–C183. Over residues 222-244 (TAAPSTQPAETTKAPPNTAAPTA) the composition is skewed to low complexity. A disordered region spans residues 222–313 (TAAPSTQPAE…LCDEKHSSQQ (92 aa)). Residues 245 to 265 (APTPAPTPAPAPAPTPAPVAP) show a composition bias toward pro residues. The segment covering 280-297 (TPEEQDDNSADESTEIEA) has biased composition (acidic residues).

It belongs to the NEP3 family. In terms of tissue distribution, nematocytes. In late planulae, is only expressed in a handful of nematocytes in the lower pharynx. Is absent from the tentacles and outer body wall.

The protein localises to the nematocyst. It is found in the secreted. Probable toxin probably only used for predation. The protein is Nematocyst expressed protein 8 of Nematostella vectensis (Starlet sea anemone).